The chain runs to 457 residues: Siroheme synthase (457 aa).

A precorrin-2 dehydrogenase /sirohydrochlorin ferrochelatase region spans residues 1-204; the sequence is MDHLPIFCQL…ADEKAVNATT (204 aa). NAD(+) is bound by residues 22 to 23 and 43 to 44; these read DV and LN. A Phosphoserine modification is found at serine 128. Positions 216-457 are uroporphyrinogen-III C-methyltransferase; it reads GEVVLVGAGP…RDKLNWFSNH (242 aa). Residue proline 225 participates in S-adenosyl-L-methionine binding. Aspartate 248 functions as the Proton acceptor in the catalytic mechanism. Lysine 270 serves as the catalytic Proton donor. Residues 301–303, isoleucine 306, 331–332, methionine 382, and glycine 411 contribute to the S-adenosyl-L-methionine site; these read GGD and TA.

In the N-terminal section; belongs to the precorrin-2 dehydrogenase / sirohydrochlorin ferrochelatase family. The protein in the C-terminal section; belongs to the precorrin methyltransferase family.

The enzyme catalyses uroporphyrinogen III + 2 S-adenosyl-L-methionine = precorrin-2 + 2 S-adenosyl-L-homocysteine + H(+). It catalyses the reaction precorrin-2 + NAD(+) = sirohydrochlorin + NADH + 2 H(+). The catalysed reaction is siroheme + 2 H(+) = sirohydrochlorin + Fe(2+). Its pathway is cofactor biosynthesis; adenosylcobalamin biosynthesis; precorrin-2 from uroporphyrinogen III: step 1/1. It participates in cofactor biosynthesis; adenosylcobalamin biosynthesis; sirohydrochlorin from precorrin-2: step 1/1. It functions in the pathway porphyrin-containing compound metabolism; siroheme biosynthesis; precorrin-2 from uroporphyrinogen III: step 1/1. The protein operates within porphyrin-containing compound metabolism; siroheme biosynthesis; siroheme from sirohydrochlorin: step 1/1. Its pathway is porphyrin-containing compound metabolism; siroheme biosynthesis; sirohydrochlorin from precorrin-2: step 1/1. Functionally, multifunctional enzyme that catalyzes the SAM-dependent methylations of uroporphyrinogen III at position C-2 and C-7 to form precorrin-2 via precorrin-1. Then it catalyzes the NAD-dependent ring dehydrogenation of precorrin-2 to yield sirohydrochlorin. Finally, it catalyzes the ferrochelation of sirohydrochlorin to yield siroheme. The chain is Siroheme synthase from Salmonella paratyphi A (strain ATCC 9150 / SARB42).